Here is a 121-residue protein sequence, read N- to C-terminus: Protein FAM241B (121 aa).

The disordered stretch occupies residues Gln12–Gly58. The span at Arg19–Phe35 shows a compositional bias: polar residues. Position 33 is a phosphoserine (Ser33). Low complexity predominate over residues Pro48–Gly58. Ser62 is subject to Phosphoserine. Residues Ile92–Val112 traverse the membrane as a helical segment.

It belongs to the FAM241 family.

It localises to the membrane. May play a role in lysosome homeostasis. The sequence is that of Protein FAM241B from Homo sapiens (Human).